Reading from the N-terminus, the 84-residue chain is Small ribosomal subunit protein uS17 (84 aa).

The protein belongs to the universal ribosomal protein uS17 family. In terms of assembly, part of the 30S ribosomal subunit.

One of the primary rRNA binding proteins, it binds specifically to the 5'-end of 16S ribosomal RNA. In Clostridium novyi (strain NT), this protein is Small ribosomal subunit protein uS17.